Reading from the N-terminus, the 332-residue chain is 6-phosphogluconolactonase (332 aa).

It belongs to the cycloisomerase 2 family.

The enzyme catalyses 6-phospho-D-glucono-1,5-lactone + H2O = 6-phospho-D-gluconate + H(+). It participates in carbohydrate degradation; pentose phosphate pathway; D-ribulose 5-phosphate from D-glucose 6-phosphate (oxidative stage): step 2/3. Functionally, catalyzes the hydrolysis of 6-phosphogluconolactone to 6-phosphogluconate. This is 6-phosphogluconolactonase from Pectobacterium carotovorum subsp. carotovorum (strain PC1).